Reading from the N-terminus, the 82-residue chain is Penaeidin-3h (82 aa).

Positions 1–19 (MRLVVCLVFLASFALVCQG) are cleaved as a signal peptide. Position 20 is a pyrrolidone carboxylic acid (glutamine 20). Cystine bridges form between cysteine 55–cysteine 73 and cysteine 67–cysteine 74. Serine amide is present on serine 81.

The protein belongs to the penaeidin family.

The protein localises to the cytoplasmic granule. Antibacterial and antifungal activity. Presents chitin-binding activity. This Penaeus vannamei (Whiteleg shrimp) protein is Penaeidin-3h.